The following is a 414-amino-acid chain: Succinylornithine transaminase (414 aa).

K260 bears the N6-(pyridoxal phosphate)lysine mark.

This sequence belongs to the class-III pyridoxal-phosphate-dependent aminotransferase family. AstC subfamily. The cofactor is pyridoxal 5'-phosphate.

The catalysed reaction is N(2)-succinyl-L-ornithine + 2-oxoglutarate = N-succinyl-L-glutamate 5-semialdehyde + L-glutamate. The protein operates within amino-acid degradation; L-arginine degradation via AST pathway; L-glutamate and succinate from L-arginine: step 3/5. Catalyzes the transamination of N(2)-succinylornithine and alpha-ketoglutarate into N(2)-succinylglutamate semialdehyde and glutamate. Can also act as an acetylornithine aminotransferase. This chain is Succinylornithine transaminase, found in Yersinia enterocolitica serotype O:8 / biotype 1B (strain NCTC 13174 / 8081).